The sequence spans 204 residues: ATP-dependent Clp protease proteolytic subunit (204 aa).

Residue Ser102 is the Nucleophile of the active site. The active site involves His127.

The protein belongs to the peptidase S14 family. Fourteen ClpP subunits assemble into 2 heptameric rings which stack back to back to give a disk-like structure with a central cavity, resembling the structure of eukaryotic proteasomes.

It localises to the cytoplasm. It carries out the reaction Hydrolysis of proteins to small peptides in the presence of ATP and magnesium. alpha-casein is the usual test substrate. In the absence of ATP, only oligopeptides shorter than five residues are hydrolyzed (such as succinyl-Leu-Tyr-|-NHMec, and Leu-Tyr-Leu-|-Tyr-Trp, in which cleavage of the -Tyr-|-Leu- and -Tyr-|-Trp bonds also occurs).. Its function is as follows. Cleaves peptides in various proteins in a process that requires ATP hydrolysis. Has a chymotrypsin-like activity. Plays a major role in the degradation of misfolded proteins. This chain is ATP-dependent Clp protease proteolytic subunit, found in Neisseria meningitidis serogroup A / serotype 4A (strain DSM 15465 / Z2491).